A 387-amino-acid chain; its full sequence is Succinate--CoA ligase [ADP-forming] subunit beta (387 aa).

An ATP-grasp domain is found at Lys9 to Lys236. ATP is bound by residues Lys45, Gly52–Gly54, Ser94, and Glu99. Residues Asn191 and Asp205 each contribute to the Mg(2+) site. Residues Asn256 and Gly318–Thr320 each bind substrate.

It belongs to the succinate/malate CoA ligase beta subunit family. In terms of assembly, heterotetramer of two alpha and two beta subunits. It depends on Mg(2+) as a cofactor.

It catalyses the reaction succinate + ATP + CoA = succinyl-CoA + ADP + phosphate. It carries out the reaction GTP + succinate + CoA = succinyl-CoA + GDP + phosphate. It functions in the pathway carbohydrate metabolism; tricarboxylic acid cycle; succinate from succinyl-CoA (ligase route): step 1/1. Its function is as follows. Succinyl-CoA synthetase functions in the citric acid cycle (TCA), coupling the hydrolysis of succinyl-CoA to the synthesis of either ATP or GTP and thus represents the only step of substrate-level phosphorylation in the TCA. The beta subunit provides nucleotide specificity of the enzyme and binds the substrate succinate, while the binding sites for coenzyme A and phosphate are found in the alpha subunit. The protein is Succinate--CoA ligase [ADP-forming] subunit beta of Mycolicibacterium vanbaalenii (strain DSM 7251 / JCM 13017 / BCRC 16820 / KCTC 9966 / NRRL B-24157 / PYR-1) (Mycobacterium vanbaalenii).